The following is an 827-amino-acid chain: Striatin homolog (827 aa).

A coiled-coil region spans residues 37 to 109 (RAHWISEKAE…VEEEEEEDDK (73 aa)). Disordered regions lie at residues 99–123 (KVEEEEEEDDKIPKNREPPKKSKDN), 181–270 (KDIN…QLQS), 311–362 (SSVS…DEQS), and 400–459 (EEGN…SELM). A compositionally biased stretch (basic and acidic residues) spans 109 to 123 (KIPKNREPPKKSKDN). 2 stretches are compositionally biased toward low complexity: residues 184–270 (NNNN…QLQS) and 311–334 (SSVSSNSGNNSINSSSDSLDTSKQ). Positions 337–346 (EDPNNVTISK) are enriched in polar residues. Low complexity-rich tracts occupy residues 347 to 356 (QQQQEQQQQQ), 416 to 432 (TPTTKSSSSSSSSSTGS), and 439 to 453 (SSSSSSGSSSSNSNT). 6 WD repeats span residues 495 to 534 (SHFDGVRSIQFHPNEPIMISASEDNSIKVWNLNHLVPTKK), 548 to 593 (GHTG…IDSY), 610 to 649 (GHQDGIWDLLSIPNTPNLLSSSADGTVSLWNTTTSEQLYT), 709 to 748 (NNNSQINKIVSHPFMPLAMTGSEDHKIEFFDLNSNTVVHS), 751 to 790 (AHSNSISSLTIDPSGLYIASCAHDSSIRFWDISSKTCIQD), and 797 to 827 (KYDESIHCIKYHPNKGYFASGGADSVIRILN).

It belongs to the WD repeat striatin family. As to quaternary structure, part of the core of STRIPAK complexes.

The protein localises to the cytoplasm. Its subcellular location is the membrane. In terms of biological role, calmodulin-binding scaffolding protein which is the center of the striatin-interacting phosphatase and kinase (STRIPAK) complexes. STRIPAK complexes have critical roles in protein (de)phosphorylation and are regulators of multiple signaling pathways including Hippo, MAPK, nuclear receptor and cytoskeleton remodeling. Different types of STRIPAK complexes are involved in a variety of biological processes such as cell growth, differentiation, apoptosis, metabolism and immune regulation. In Dictyostelium discoideum (Social amoeba), this protein is Striatin homolog (strn).